We begin with the raw amino-acid sequence, 314 residues long: Transcriptional regulatory protein GlnL (314 aa).

Residues 2–118 form the Response regulatory domain; sequence RFFIADDDRA…EIVTVLQKVK (117 aa). At D54 the chain carries 4-aspartylphosphate.

In terms of processing, phosphorylated by GlnK.

It is found in the cytoplasm. Member of the two-component regulatory system GlnL/GlnK that positively regulates the expression of the glsA-glnT operon in response to glutamine. GlnL binds the promoter region of glsA-glnT in vitro. The protein is Transcriptional regulatory protein GlnL (glnL) of Bacillus subtilis (strain 168).